A 279-amino-acid chain; its full sequence is Coiled-coil domain-containing protein 117 (279 aa).

Residues 1–82 (MAALGRPFSG…REEEEDDDCP (82 aa)) are disordered. R48 is subject to Omega-N-methylarginine. At S53 the chain carries Phosphoserine. Basic residues predominate over residues 63–72 (VSVHCKKKHK). Positions 141 to 168 (QCEVARRKLQEIEDRIIDEDEEVEADRN) form a coiled coil. Positions 217–279 (LLSDKPKPSS…ATSTEEEMEL (63 aa)) are disordered. Polar residues-rich tracts occupy residues 224-235 (PSSNTKNYTGES) and 262-272 (SLYNSLETATS).

In terms of assembly, interacts with CIAO2B; the interaction is direct. Interacts with MMS19; the interaction is indirect.

Its subcellular location is the cytoplasm. The protein resides in the cytoskeleton. It localises to the spindle. The protein localises to the nucleus. Functionally, facilitates DNA repair, cell cycle progression, and cell proliferation through its interaction with CIAO2B. This Homo sapiens (Human) protein is Coiled-coil domain-containing protein 117.